The following is a 597-amino-acid chain: Arginine--tRNA ligase (597 aa).

Positions 23 to 32 (QAAAARQASQ) are enriched in low complexity. The tract at residues 23–43 (QAAAARQASQPLDPQLAPASK) is disordered. Positions 137 to 147 (PNIAKEMHVGH) match the 'HIGH' region motif.

The protein belongs to the class-I aminoacyl-tRNA synthetase family. As to quaternary structure, monomer.

Its subcellular location is the cytoplasm. The enzyme catalyses tRNA(Arg) + L-arginine + ATP = L-arginyl-tRNA(Arg) + AMP + diphosphate. In Synechococcus sp. (strain WH7803), this protein is Arginine--tRNA ligase.